The following is a 321-amino-acid chain: Endochitinase 1 (321 aa).

A signal peptide spans 1-21; that stretch reads MSFRALSVFSLFLSYLILGSA. The Chitin-binding type-1 domain maps to 22-64; the sequence is EQCGRQAGGALCPGGLCCSQFGWCGNTDDYCKKENGCQSQCSG. 7 disulfide bridges follow: Cys-24–Cys-39, Cys-33–Cys-45, Cys-38–Cys-52, Cys-58–Cys-62, Cys-93–Cys-156, Cys-167–Cys-175, and Cys-274–Cys-306. Positions 65–98 are hinge; the sequence is SGGDTGGLDSLITRERFDQMLLHRNDGGCPARGF. Residues 99-321 form a catalytic region; the sequence is YTYDAFIAAA…YNNGPSVDSM (223 aa). Residue Glu-137 is the Proton donor of the active site.

Belongs to the glycosyl hydrolase 19 family. Chitinase class I subfamily.

The protein localises to the vacuole. The catalysed reaction is Random endo-hydrolysis of N-acetyl-beta-D-glucosaminide (1-&gt;4)-beta-linkages in chitin and chitodextrins.. Functionally, defense against chitin-containing fungal pathogens. This is Endochitinase 1 (CHIA1) from Theobroma cacao (Cacao).